Here is a 288-residue protein sequence, read N- to C-terminus: MKRTPHLLAIQSHVVFGHAGNSAAVFPMQRIGVNVWPLNTVQFSNHTQYKQWTGEVLAPQQIPALIDGIAAIGELGNCDAVLSGYLGSAAQGRAILTGVARIKAANPKALYLCDPVMGHPEKGCIVAPEVSDFLLQEAAAMADFMCPNQLELDSFSGRKPESLHDCLAMARALLARGPRAIVVKHLDYPGKAADGFEMLLVTAEASWHLRRPLLAFPRQPVGVGDLTSGLFLSRVLLGDDLVAAFEFAAAAVHEVLLETQACGSYELELVRAQDRIAHPRVKFEAVRL.

Residues Ser-12 and 47–48 contribute to the substrate site; that span reads TQ. ATP contacts are provided by residues Asp-114, Glu-151, Lys-184, and 211–214; that span reads RPLL. Position 225 (Asp-225) interacts with substrate.

This sequence belongs to the pyridoxine kinase family. PdxY subfamily. As to quaternary structure, homodimer. Mg(2+) is required as a cofactor.

It catalyses the reaction pyridoxal + ATP = pyridoxal 5'-phosphate + ADP + H(+). It functions in the pathway cofactor metabolism; pyridoxal 5'-phosphate salvage; pyridoxal 5'-phosphate from pyridoxal: step 1/1. Its function is as follows. Pyridoxal kinase involved in the salvage pathway of pyridoxal 5'-phosphate (PLP). Catalyzes the phosphorylation of pyridoxal to PLP. The polypeptide is Pyridoxal kinase PdxY (Pseudomonas syringae pv. syringae (strain B728a)).